The primary structure comprises 564 residues: Dihydroxy-acid dehydratase (564 aa).

Cys53 lines the [2Fe-2S] cluster pocket. Mg(2+) is bound at residue Asp85. Cys126 is a binding site for [2Fe-2S] cluster. Residues Asp127 and Lys128 each coordinate Mg(2+). N6-carboxylysine is present on Lys128. Position 203 (Cys203) interacts with [2Fe-2S] cluster. Glu454 provides a ligand contact to Mg(2+). Ser480 functions as the Proton acceptor in the catalytic mechanism.

It belongs to the IlvD/Edd family. In terms of assembly, homodimer. Requires [2Fe-2S] cluster as cofactor. It depends on Mg(2+) as a cofactor.

It carries out the reaction (2R)-2,3-dihydroxy-3-methylbutanoate = 3-methyl-2-oxobutanoate + H2O. The catalysed reaction is (2R,3R)-2,3-dihydroxy-3-methylpentanoate = (S)-3-methyl-2-oxopentanoate + H2O. It functions in the pathway amino-acid biosynthesis; L-isoleucine biosynthesis; L-isoleucine from 2-oxobutanoate: step 3/4. It participates in amino-acid biosynthesis; L-valine biosynthesis; L-valine from pyruvate: step 3/4. In terms of biological role, functions in the biosynthesis of branched-chain amino acids. Catalyzes the dehydration of (2R,3R)-2,3-dihydroxy-3-methylpentanoate (2,3-dihydroxy-3-methylvalerate) into 2-oxo-3-methylpentanoate (2-oxo-3-methylvalerate) and of (2R)-2,3-dihydroxy-3-methylbutanoate (2,3-dihydroxyisovalerate) into 2-oxo-3-methylbutanoate (2-oxoisovalerate), the penultimate precursor to L-isoleucine and L-valine, respectively. The sequence is that of Dihydroxy-acid dehydratase from Leifsonia xyli subsp. xyli (strain CTCB07).